The following is a 431-amino-acid chain: Septin-11 (431 aa).

Ala2 carries the N-acetylalanine modification. The residue at position 9 (Ser9) is a Phosphoserine. The 267-residue stretch at 38-304 (QGFCFNILCV…ELYRRCKLEE (267 aa)) folds into the Septin-type G domain. Residues 48–55 (GETGIGKS) are G1 motif. GTP contacts are provided by residues 48–55 (GETGIGKS), Gly103, 184–192 (KADTIAKNE), Gly238, and Arg253. The segment at 100-103 (DTVG) is G3 motif. A G4 motif region spans residues 183–186 (AKAD). Residues 320–413 (QETYEAKRNE…LLQSQAQQSG (94 aa)) are a coiled coil. The segment at 400 to 431 (AAAQLLQSQAQQSGAQQTKKDKDKKNPWLCTE) is disordered. Over residues 401-416 (AAQLLQSQAQQSGAQQ) the composition is skewed to low complexity.

Belongs to the TRAFAC class TrmE-Era-EngA-EngB-Septin-like GTPase superfamily. Septin GTPase family. In terms of assembly, septins polymerize into heterooligomeric protein complexes that form filaments, and can associate with cellular membranes, actin filaments and microtubules. Forms homooligomers. GTPase activity is required for filament formation. Interacts with SEPTIN7, SEPTIN9 and SEPTIN12. Expressed in the cerebral cortex (at protein level).

The protein localises to the cytoplasm. It is found in the cytoskeleton. Its subcellular location is the synapse. It localises to the cell projection. The protein resides in the dendritic spine. The protein localises to the axon. Functionally, filament-forming cytoskeletal GTPase. May play a role in cytokinesis (Potential). May play a role in the cytoarchitecture of neurons, including dendritic arborization and dendritic spines, and in GABAergic synaptic connectivity. The protein is Septin-11 of Mus musculus (Mouse).